We begin with the raw amino-acid sequence, 591 residues long: Aspartate--tRNA(Asp/Asn) ligase (591 aa).

Residue glutamate 174 coordinates L-aspartate. Positions 198 to 201 (QLFK) are aspartate. Position 220 (arginine 220) interacts with L-aspartate. Residues 220–222 (RDE) and glutamine 229 each bind ATP. An L-aspartate-binding site is contributed by histidine 450. ATP is bound at residue glutamate 483. Arginine 490 is a binding site for L-aspartate. Position 535–538 (535–538 (GLDR)) interacts with ATP.

The protein belongs to the class-II aminoacyl-tRNA synthetase family. Type 1 subfamily. As to quaternary structure, homodimer.

Its subcellular location is the cytoplasm. It catalyses the reaction tRNA(Asx) + L-aspartate + ATP = L-aspartyl-tRNA(Asx) + AMP + diphosphate. Functionally, aspartyl-tRNA synthetase with relaxed tRNA specificity since it is able to aspartylate not only its cognate tRNA(Asp) but also tRNA(Asn). Reaction proceeds in two steps: L-aspartate is first activated by ATP to form Asp-AMP and then transferred to the acceptor end of tRNA(Asp/Asn). This chain is Aspartate--tRNA(Asp/Asn) ligase, found in Pseudomonas savastanoi pv. phaseolicola (strain 1448A / Race 6) (Pseudomonas syringae pv. phaseolicola (strain 1448A / Race 6)).